A 537-amino-acid chain; its full sequence is RNA polymerase sigma-54 factor 2 (537 aa).

The segment at 52–90 (ANDEASGGEAPAEAGQFSDSDGGHNDEPGGGPGEAFEPG) is disordered. Low complexity predominate over residues 55–66 (EASGGEAPAEAG). Positions 403–422 (NLKAVADAIQMHESTVSRVT) form a DNA-binding region, H-T-H motif. The short motif at 492–500 (ARRTVAKYR) is the RPON box element. Residues 507–537 (SSVQRRRDKQSALGNVLSTAMSDRSRNPEPA) form a disordered region. Residues 518–528 (ALGNVLSTAMS) are compositionally biased toward polar residues.

This sequence belongs to the sigma-54 factor family.

Functionally, sigma factors are initiation factors that promote the attachment of RNA polymerase to specific initiation sites and are then released. This sigma factor is responsible for the expression of the nitrogen fixation genes. This chain is RNA polymerase sigma-54 factor 2 (rpoN2), found in Bradyrhizobium diazoefficiens (strain JCM 10833 / BCRC 13528 / IAM 13628 / NBRC 14792 / USDA 110).